We begin with the raw amino-acid sequence, 136 residues long: Histone H3-7 (136 aa).

The disordered stretch occupies residues 1-43 (MARTKQTARKSTGGKAPRKQLATKAARKSAPATGGVKKPHRYR). R3 is modified (asymmetric dimethylarginine). R3 carries the citrulline; alternate modification. At T4 the chain carries Phosphothreonine. K5 carries the post-translational modification Allysine; alternate. Residue K5 is modified to N6,N6,N6-trimethyllysine; alternate. Residue K5 is modified to N6,N6-dimethyllysine; alternate. Residue K5 is modified to N6-(2-hydroxyisobutyryl)lysine; alternate. K5 is subject to N6-(beta-hydroxybutyryl)lysine; alternate. K5 bears the N6-acetyllysine; alternate mark. K5 bears the N6-methyllysine; alternate mark. Position 6 is a 5-glutamyl dopamine; alternate (Q6). The residue at position 6 (Q6) is a 5-glutamyl serotonin; alternate. The residue at position 7 (T7) is a Phosphothreonine. A Citrulline; alternate modification is found at R9. Position 9 is a symmetric dimethylarginine (R9). K10 bears the N6,N6,N6-trimethyllysine; alternate mark. An N6,N6-dimethyllysine; alternate modification is found at K10. K10 is modified (N6-(2-hydroxyisobutyryl)lysine; alternate). Position 10 is an N6-(beta-hydroxybutyryl)lysine; alternate (K10). The residue at position 10 (K10) is an N6-acetyllysine; alternate. K10 carries the post-translational modification N6-methyllysine; alternate. An N6-lactoyllysine; alternate modification is found at K10. Residue S11 is modified to ADP-ribosylserine; alternate. S11 is subject to Phosphoserine; alternate. T12 carries the phosphothreonine modification. K15 carries the post-translational modification N6-(2-hydroxyisobutyryl)lysine; alternate. The residue at position 15 (K15) is an N6-(beta-hydroxybutyryl)lysine; alternate. Position 15 is an N6-acetyllysine; alternate (K15). An N6-lactoyllysine; alternate modification is found at K15. K15 is modified (N6-glutaryllysine; alternate). K15 is modified (N6-succinyllysine; alternate). The residue at position 18 (R18) is an Asymmetric dimethylarginine. Residue R18 is modified to Citrulline; alternate. An N6-(2-hydroxyisobutyryl)lysine; alternate mark is found at K19 and K24. An N6-(beta-hydroxybutyryl)lysine; alternate mark is found at K19 and K24. N6-acetyllysine; alternate occurs at positions 19 and 24. Residues K19 and K24 each carry the N6-methyllysine; alternate modification. K19 and K24 each carry N6-lactoyllysine; alternate. An N6-glutaryllysine; alternate mark is found at K19 and K24. K19 and K24 each carry N6-butyryllysine; alternate. R27 is subject to Citrulline. Position 28 is an N6,N6,N6-trimethyllysine; alternate (K28). Residue K28 is modified to N6,N6-dimethyllysine; alternate. Position 28 is an N6-(2-hydroxyisobutyryl)lysine; alternate (K28). An N6-acetyllysine; alternate modification is found at K28. K28 carries the N6-methyllysine; alternate modification. An N6-lactoyllysine; alternate modification is found at K28. An N6-glutaryllysine; alternate modification is found at K28. S29 carries the ADP-ribosylserine; alternate modification. S29 is subject to Phosphoserine; alternate. K37 carries the N6,N6,N6-trimethyllysine; alternate modification. Residue K37 is modified to N6,N6-dimethyllysine; alternate. An N6-(2-hydroxyisobutyryl)lysine; alternate modification is found at K37. At K37 the chain carries N6-acetyllysine; alternate. Position 37 is an N6-methyllysine; alternate (K37). Residue K38 is modified to N6-methyllysine. Residue Y42 is modified to Phosphotyrosine. An N6,N6,N6-trimethyllysine; alternate modification is found at K57. K57 carries the post-translational modification N6-(2-hydroxyisobutyryl)lysine; alternate. Residue K57 is modified to N6-(beta-hydroxybutyryl)lysine; alternate. K57 is subject to N6-acetyllysine; alternate. K57 is subject to N6-lactoyllysine; alternate. N6-glutaryllysine; alternate is present on K57. At K57 the chain carries N6-succinyllysine; alternate. K57 carries the post-translational modification N6-methyllysine. S58 carries the post-translational modification Phosphoserine. N6-(2-hydroxyisobutyryl)lysine; alternate is present on residues K65 and K80. N6-methyllysine; alternate is present on residues K65 and K80. K80 carries the post-translational modification N6,N6,N6-trimethyllysine; alternate. K80 is modified (N6,N6-dimethyllysine; alternate). The residue at position 80 (K80) is an N6-acetyllysine; alternate. K80 bears the N6-lactoyllysine; alternate mark. K80 carries the N6-glutaryllysine; alternate modification. The residue at position 80 (K80) is an N6-succinyllysine; alternate. T81 is modified (phosphothreonine). S87 is subject to Phosphoserine. Residue T108 is modified to Phosphothreonine. N6-acetyllysine; alternate occurs at positions 116 and 123. Residues K116 and K123 each carry the N6-glutaryllysine; alternate modification. K123 is subject to N6-(2-hydroxyisobutyryl)lysine; alternate. K123 is modified (N6-methyllysine; alternate). An N6-succinyllysine; alternate modification is found at K123.

Belongs to the histone H3 family. In terms of assembly, the nucleosome is a histone octamer containing two molecules each of H2A, H2B, H3 and H4 assembled in one H3-H4 heterotetramer and two H2A-H2B heterodimers. The octamer wraps approximately 147 bp of DNA. During nucleosome assembly the chaperone ASF1A interacts with the histone H3-H4 heterodimer. Acetylation is generally linked to gene activation. Acetylation on Lys-10 (H3K9ac) impairs methylation at Arg-9 (H3R8me2s). Acetylation on Lys-19 (H3K18ac) and Lys-24 (H3K24ac) favors methylation at Arg-18 (H3R17me). Acetylation at Lys-123 (H3K122ac) by EP300/p300 plays a central role in chromatin structure: localizes at the surface of the histone octamer and stimulates transcription, possibly by promoting nucleosome instability. Post-translationally, citrullination at Arg-9 (H3R8ci) and/or Arg-18 (H3R17ci) by PADI4 impairs methylation and represses transcription. In terms of processing, asymmetric dimethylation at Arg-18 (H3R17me2a) by CARM1 is linked to gene activation. Symmetric dimethylation at Arg-9 (H3R8me2s) by PRMT5 is linked to gene repression. Asymmetric dimethylation at Arg-3 (H3R2me2a) by PRMT6 is linked to gene repression and is mutually exclusive with H3 Lys-5 methylation (H3K4me2 and H3K4me3). H3R2me2a is present at the 3' of genes regardless of their transcription state and is enriched on inactive promoters, while it is absent on active promoters. Methylation at Lys-5 (H3K4me), Lys-37 (H3K36me) and Lys-80 (H3K79me) are linked to gene activation. Methylation at Lys-5 (H3K4me) facilitates subsequent acetylation of H3 and H4. Methylation at Lys-80 (H3K79me) is associated with DNA double-strand break (DSB) responses and is a specific target for TP53BP1. Methylation at Lys-10 (H3K9me) and Lys-28 (H3K27me) are linked to gene repression. Methylation at Lys-10 (H3K9me) is a specific target for HP1 proteins (CBX1, CBX3 and CBX5) and prevents subsequent phosphorylation at Ser-11 (H3S10ph) and acetylation of H3 and H4. Methylation at Lys-5 (H3K4me) and Lys-80 (H3K79me) require preliminary monoubiquitination of H2B at 'Lys-120'. Methylation at Lys-10 (H3K9me) and Lys-28 (H3K27me) are enriched in inactive X chromosome chromatin. Monomethylation at Lys-57 (H3K56me1) by EHMT2/G9A in G1 phase promotes interaction with PCNA and is required for DNA replication. Post-translationally, phosphorylated at Thr-4 (H3T3ph) by HASPIN during prophase and dephosphorylated during anaphase. Phosphorylation at Ser-11 (H3S10ph) by AURKB is crucial for chromosome condensation and cell-cycle progression during mitosis and meiosis. In addition phosphorylation at Ser-11 (H3S10ph) by RPS6KA4 and RPS6KA5 is important during interphase because it enables the transcription of genes following external stimulation, like mitogens, stress, growth factors or UV irradiation and result in the activation of genes, such as c-fos and c-jun. Phosphorylation at Ser-11 (H3S10ph), which is linked to gene activation, prevents methylation at Lys-10 (H3K9me) but facilitates acetylation of H3 and H4. Phosphorylation at Ser-11 (H3S10ph) by AURKB mediates the dissociation of HP1 proteins (CBX1, CBX3 and CBX5) from heterochromatin. Phosphorylation at Ser-11 (H3S10ph) is also an essential regulatory mechanism for neoplastic cell transformation. Phosphorylated at Ser-29 (H3S28ph) by MAP3K20 isoform 1, RPS6KA5 or AURKB during mitosis or upon ultraviolet B irradiation. Phosphorylation at Thr-7 (H3T6ph) by PRKCB is a specific tag for epigenetic transcriptional activation that prevents demethylation of Lys-5 (H3K4me) by LSD1/KDM1A. At centromeres, specifically phosphorylated at Thr-12 (H3T11ph) from prophase to early anaphase, by DAPK3 and PKN1. Phosphorylation at Thr-12 (H3T11ph) by PKN1 or isoform M2 of PKM (PKM2) is a specific tag for epigenetic transcriptional activation that promotes demethylation of Lys-10 (H3K9me) by KDM4C/JMJD2C. Phosphorylation at Tyr-42 (H3Y41ph) by JAK2 promotes exclusion of CBX5 (HP1 alpha) from chromatin. In terms of processing, ubiquitinated. Lysine deamination at Lys-5 (H3K4all) to form allysine is mediated by LOXL2. Allysine formation by LOXL2 only takes place on H3K4me3 and results in gene repression. Post-translationally, butyrylation of histones marks active promoters and competes with histone acetylation. It is present during late spermatogenesis. In terms of processing, succinylation at Lys-80 (H3K79succ) by KAT2A takes place with a maximum frequency around the transcription start sites of genes. It gives a specific tag for epigenetic transcription activation. Desuccinylation at Lys-123 (H3K122succ) by SIRT7 in response to DNA damage promotes chromatin condensation and double-strand breaks (DSBs) repair. Serine ADP-ribosylation constitutes the primary form of ADP-ribosylation of proteins in response to DNA damage. Serine ADP-ribosylation at Ser-11 (H3S10ADPr) is mutually exclusive with phosphorylation at Ser-11 (H3S10ph) and impairs acetylation at Lys-10 (H3K9ac).

It is found in the nucleus. The protein localises to the chromosome. In terms of biological role, core component of nucleosome. Nucleosomes wrap and compact DNA into chromatin, limiting DNA accessibility to the cellular machineries which require DNA as a template. Histones thereby play a central role in transcription regulation, DNA repair, DNA replication and chromosomal stability. DNA accessibility is regulated via a complex set of post-translational modifications of histones, also called histone code, and nucleosome remodeling. The sequence is that of Histone H3-7 from Homo sapiens (Human).